The primary structure comprises 476 residues: Aspartyl/glutamyl-tRNA(Asn/Gln) amidotransferase subunit B (476 aa).

Belongs to the GatB/GatE family. GatB subfamily. In terms of assembly, heterotrimer of A, B and C subunits.

It carries out the reaction L-glutamyl-tRNA(Gln) + L-glutamine + ATP + H2O = L-glutaminyl-tRNA(Gln) + L-glutamate + ADP + phosphate + H(+). It catalyses the reaction L-aspartyl-tRNA(Asn) + L-glutamine + ATP + H2O = L-asparaginyl-tRNA(Asn) + L-glutamate + ADP + phosphate + 2 H(+). In terms of biological role, allows the formation of correctly charged Asn-tRNA(Asn) or Gln-tRNA(Gln) through the transamidation of misacylated Asp-tRNA(Asn) or Glu-tRNA(Gln) in organisms which lack either or both of asparaginyl-tRNA or glutaminyl-tRNA synthetases. The reaction takes place in the presence of glutamine and ATP through an activated phospho-Asp-tRNA(Asn) or phospho-Glu-tRNA(Gln). The chain is Aspartyl/glutamyl-tRNA(Asn/Gln) amidotransferase subunit B from Clostridium botulinum (strain Eklund 17B / Type B).